We begin with the raw amino-acid sequence, 106 residues long: Small ribosomal subunit protein mS33 (106 aa).

Position 2 is an N-acetylserine (Ser-2). A compositionally biased stretch (basic residues) spans 85–94 (LKKLRGKVKP). Residues 85 to 106 (LKKLRGKVKPRKGEGKRAAKKK) are disordered. Over residues 95-106 (RKGEGKRAAKKK) the composition is skewed to basic and acidic residues.

Belongs to the mitochondrion-specific ribosomal protein mS33 family. As to quaternary structure, component of the mitochondrial ribosome small subunit (28S) which comprises a 12S rRNA and about 30 distinct proteins.

The protein localises to the mitochondrion. The polypeptide is Small ribosomal subunit protein mS33 (Bos taurus (Bovine)).